Consider the following 194-residue polypeptide: KMLTSRTLHGVMQNIRDIVNLKKSEFWNKGGPAWQKIAVCLVFDGIDPCDKDTLDVLATIGIYQDGVMKKDVDGKETIAHIFEYTTQLSVTANQQLIRPHDDGPSTLPPVQMMFCLKQKNSKKINSHRWLFNAFGRILNPEICILLDAGTKPGHKSLLALWEAFYNDKDLGGSCGEIHAMLGKGWKNLINPLVA.

Belongs to the chitin synthase family. Class III subfamily.

It localises to the cell membrane. It carries out the reaction [(1-&gt;4)-N-acetyl-beta-D-glucosaminyl](n) + UDP-N-acetyl-alpha-D-glucosamine = [(1-&gt;4)-N-acetyl-beta-D-glucosaminyl](n+1) + UDP + H(+). In terms of biological role, polymerizes chitin, a structural polymer of the cell wall and septum, by transferring the sugar moiety of UDP-GlcNAc to the non-reducing end of the growing chitin polymer. The polypeptide is Chitin synthase 2 (CHS2) (Ajellomyces capsulatus (Darling's disease fungus)).